Reading from the N-terminus, the 449-residue chain is UDP-N-acetylmuramate--L-alanine ligase (449 aa).

ATP is bound at residue 113-119 (GSHGKTT).

It belongs to the MurCDEF family.

It is found in the cytoplasm. It carries out the reaction UDP-N-acetyl-alpha-D-muramate + L-alanine + ATP = UDP-N-acetyl-alpha-D-muramoyl-L-alanine + ADP + phosphate + H(+). It functions in the pathway cell wall biogenesis; peptidoglycan biosynthesis. Cell wall formation. This Hydrogenobaculum sp. (strain Y04AAS1) protein is UDP-N-acetylmuramate--L-alanine ligase.